Consider the following 259-residue polypeptide: Putative carbamate hydrolase RutD (259 aa).

It belongs to the AB hydrolase superfamily. Hydrolase RutD family.

It catalyses the reaction carbamate + 2 H(+) = NH4(+) + CO2. Involved in pyrimidine catabolism. May facilitate the hydrolysis of carbamate, a reaction that can also occur spontaneously. The polypeptide is Putative carbamate hydrolase RutD (Pseudomonas syringae pv. syringae (strain B728a)).